The sequence spans 768 residues: Ribonucleoside-diphosphate reductase large chain (768 aa).

ATP is bound by residues 7–8 (SK) and 13–19 (EKLGIDL). GDP is bound by residues Thr-196 and Ser-211. A disulfide bridge links Cys-212 with Cys-437. Residues 220 to 222 (DSI), Lys-237, and Arg-250 each bind dTTP. A GDP-binding site is contributed by Asn-420. Asn-420 (proton acceptor) is an active-site residue. The active-site Cysteine radical intermediate is the Cys-422. Glu-424 provides a ligand contact to GDP. The active-site Proton acceptor is Glu-424.

Belongs to the ribonucleoside diphosphate reductase large chain family. Heterodimer of a large and a small subunit.

The enzyme catalyses a 2'-deoxyribonucleoside 5'-diphosphate + [thioredoxin]-disulfide + H2O = a ribonucleoside 5'-diphosphate + [thioredoxin]-dithiol. Its activity is regulated as follows. Under complex allosteric control mediated by deoxynucleoside triphosphates and ATP binding to separate specificity and activation sites on the large subunit. The type of nucleotide bound at the specificity site determines substrate preference. It seems probable that ATP makes the enzyme reduce CDP and UDP, dGTP favors ADP reduction and dTTP favors GDP reduction. Stimulated by ATP and inhibited by dATP binding to the activity site. In terms of biological role, provides the precursors necessary for DNA synthesis. Catalyzes the biosynthesis of deoxyribonucleotides from the corresponding ribonucleotides. In Encephalitozoon cuniculi (strain GB-M1) (Microsporidian parasite), this protein is Ribonucleoside-diphosphate reductase large chain.